Consider the following 109-residue polypeptide: U26-theraphotoxin-Cg1b (109 aa).

A signal peptide spans M1–A18. Positions Y19–R67 are excised as a propeptide. 3 cysteine pairs are disulfide-bonded: C68–C83, C75–C88, and C82–C103.

Belongs to the neurotoxin 14 (magi-1) family. 07 (Jztx-56) subfamily. Expressed by the venom gland.

Its subcellular location is the secreted. Probable ion channel inhibitor. The protein is U26-theraphotoxin-Cg1b of Chilobrachys guangxiensis (Chinese earth tiger tarantula).